We begin with the raw amino-acid sequence, 167 residues long: Small ribosomal subunit protein uS5 (167 aa).

In terms of domain architecture, S5 DRBM spans 12 to 75 (LNEKLIAVNR…EKARRNIRDV (64 aa)).

Belongs to the universal ribosomal protein uS5 family. As to quaternary structure, part of the 30S ribosomal subunit. Contacts proteins S4 and S8.

With S4 and S12 plays an important role in translational accuracy. In terms of biological role, located at the back of the 30S subunit body where it stabilizes the conformation of the head with respect to the body. The sequence is that of Small ribosomal subunit protein uS5 from Psychromonas ingrahamii (strain DSM 17664 / CCUG 51855 / 37).